Reading from the N-terminus, the 189-residue chain is UPF0398 protein LGAS_1023 (189 aa).

It belongs to the UPF0398 family.

The polypeptide is UPF0398 protein LGAS_1023 (Lactobacillus gasseri (strain ATCC 33323 / DSM 20243 / BCRC 14619 / CIP 102991 / JCM 1131 / KCTC 3163 / NCIMB 11718 / NCTC 13722 / AM63)).